The sequence spans 445 residues: GTPase Der (445 aa).

EngA-type G domains follow at residues 3–167 and 180–353; these read PVIA…YAGQ and IKIA…AAAM. Residues 9–16, 56–60, 119–122, 186–193, 233–237, and 298–301 each bind GTP; these read GRPNVGKS, DTGGF, NKAE, DTAGL, and NKWD. The region spanning 354 to 438 is the KH-like domain; that stretch reads SKLPTPKLTR…PLRIEFRSSN (85 aa).

The protein belongs to the TRAFAC class TrmE-Era-EngA-EngB-Septin-like GTPase superfamily. EngA (Der) GTPase family. As to quaternary structure, associates with the 50S ribosomal subunit.

Functionally, GTPase that plays an essential role in the late steps of ribosome biogenesis. The polypeptide is GTPase Der (Burkholderia cenocepacia (strain ATCC BAA-245 / DSM 16553 / LMG 16656 / NCTC 13227 / J2315 / CF5610) (Burkholderia cepacia (strain J2315))).